A 380-amino-acid polypeptide reads, in one-letter code: mRNA cap guanine-N(7) methyltransferase (380 aa).

Positions 24 to 333 constitute an mRNA cap 0 methyltransferase domain; sequence SRIFFMRNMN…MYLVFGFRKK (310 aa). 33–34 provides a ligand contact to mRNA; it reads NN. Residues lysine 37, alanine 62, aspartate 84, aspartate 117, glutamine 139, and tyrosine 144 each coordinate S-adenosyl-L-methionine. The tract at residues 336–380 is disordered; sequence EAEKTEEEPATTKPVAESESEQKEVTESEEKEDQEDCEHQEAQTN.

The protein belongs to the class I-like SAM-binding methyltransferase superfamily. mRNA cap 0 methyltransferase family.

It localises to the nucleus. The catalysed reaction is a 5'-end (5'-triphosphoguanosine)-ribonucleoside in mRNA + S-adenosyl-L-methionine = a 5'-end (N(7)-methyl 5'-triphosphoguanosine)-ribonucleoside in mRNA + S-adenosyl-L-homocysteine. In terms of biological role, mRNA-capping methyltransferase that methylates the N7 position of the added guanosine to the 5'-cap structure of mRNAs. Binds RNA containing 5'-terminal GpppC. The sequence is that of mRNA cap guanine-N(7) methyltransferase (tag-72) from Caenorhabditis elegans.